The primary structure comprises 640 residues: Threonine--tRNA ligase (640 aa).

Positions 1 to 61 (MPIITLPNGD…TEDATLQIIT (61 aa)) constitute a TGS domain. The segment at 242-533 (DHRKIGKALD…LIEHYAGFMP (292 aa)) is catalytic. Zn(2+) is bound by residues Cys-333, His-384, and His-510.

This sequence belongs to the class-II aminoacyl-tRNA synthetase family. In terms of assembly, homodimer. The cofactor is Zn(2+).

Its subcellular location is the cytoplasm. It carries out the reaction tRNA(Thr) + L-threonine + ATP = L-threonyl-tRNA(Thr) + AMP + diphosphate + H(+). Catalyzes the attachment of threonine to tRNA(Thr) in a two-step reaction: L-threonine is first activated by ATP to form Thr-AMP and then transferred to the acceptor end of tRNA(Thr). Also edits incorrectly charged L-seryl-tRNA(Thr). In Acinetobacter baylyi (strain ATCC 33305 / BD413 / ADP1), this protein is Threonine--tRNA ligase.